A 68-amino-acid chain; its full sequence is Large ribosomal subunit protein bL32 (68 aa).

Positions M1–A24 are disordered.

Belongs to the bacterial ribosomal protein bL32 family.

This chain is Large ribosomal subunit protein bL32, found in Paracoccus denitrificans (strain Pd 1222).